Here is a 160-residue protein sequence, read N- to C-terminus: Lipoprotein signal peptidase (160 aa).

The next 3 membrane-spanning stretches (helical) occupy residues 13–33 (IYIT…RLII), 72–92 (WFLS…ITKL), and 104–124 (SLII…GFVV). Active-site residues include Asp125 and Asp143. Residues 134-154 (WHFATFNIADCSIFIGIIILM) form a helical membrane-spanning segment.

The protein belongs to the peptidase A8 family.

The protein localises to the cell inner membrane. It carries out the reaction Release of signal peptides from bacterial membrane prolipoproteins. Hydrolyzes -Xaa-Yaa-Zaa-|-(S,diacylglyceryl)Cys-, in which Xaa is hydrophobic (preferably Leu), and Yaa (Ala or Ser) and Zaa (Gly or Ala) have small, neutral side chains.. The protein operates within protein modification; lipoprotein biosynthesis (signal peptide cleavage). This protein specifically catalyzes the removal of signal peptides from prolipoproteins. The chain is Lipoprotein signal peptidase from Buchnera aphidicola subsp. Acyrthosiphon pisum (strain 5A).